We begin with the raw amino-acid sequence, 165 residues long: Nucleotide-binding protein TGRD_519 (165 aa).

Belongs to the YajQ family.

Its function is as follows. Nucleotide-binding protein. This is Nucleotide-binding protein TGRD_519 from Endomicrobium trichonymphae.